A 385-amino-acid chain; its full sequence is 8-amino-7-oxononanoate synthase (385 aa).

Arg21 is a substrate binding site. 108-109 (GF) provides a ligand contact to pyridoxal 5'-phosphate. His133 contributes to the substrate binding site. Pyridoxal 5'-phosphate-binding residues include Ser179, His207, and Thr233. Lys236 carries the post-translational modification N6-(pyridoxal phosphate)lysine. Thr352 contacts substrate.

This sequence belongs to the class-II pyridoxal-phosphate-dependent aminotransferase family. BioF subfamily. Homodimer. The cofactor is pyridoxal 5'-phosphate.

It catalyses the reaction 6-carboxyhexanoyl-[ACP] + L-alanine + H(+) = (8S)-8-amino-7-oxononanoate + holo-[ACP] + CO2. The protein operates within cofactor biosynthesis; biotin biosynthesis. Catalyzes the decarboxylative condensation of pimeloyl-[acyl-carrier protein] and L-alanine to produce 8-amino-7-oxononanoate (AON), [acyl-carrier protein], and carbon dioxide. This Salmonella enteritidis PT4 (strain P125109) protein is 8-amino-7-oxononanoate synthase.